A 281-amino-acid polypeptide reads, in one-letter code: Nucleotide-binding protein MADE_1004170 (281 aa).

8 to 15 (GRSGSGKS) provides a ligand contact to ATP. 56-59 (DVRN) contacts GTP.

Belongs to the RapZ-like family.

Displays ATPase and GTPase activities. In Alteromonas mediterranea (strain DSM 17117 / CIP 110805 / LMG 28347 / Deep ecotype), this protein is Nucleotide-binding protein MADE_1004170.